A 1873-amino-acid chain; its full sequence is Voltage-dependent L-type calcium channel subunit alpha-1S (1873 aa).

The disordered stretch occupies residues 1-23 (MEPSSPQDEGLRKKQPKKPVPEI). Over 1-51 (MEPSSPQDEGLRKKQPKKPVPEILPRPPRALFCLTLENPLRKACISIVEWK) the chain is Cytoplasmic. One copy of the I repeat lies at 38 to 337 (NPLRKACISI…LVLGVLSGEF (300 aa)). Residues 52–70 (PFETIILLTIFANCVALAV) traverse the membrane as a helical segment. The Extracellular portion of the chain corresponds to 71–85 (YLPMPEDDNNSLNLG). Asn-79 carries an N-linked (GlcNAc...) asparagine glycan. Residues 86 to 106 (LEKLEYFFLIVFSIEAAMKII) form a helical membrane-spanning segment. The Cytoplasmic segment spans residues 107-115 (AYGFLFHQD). Residues 116–136 (AYLRSGWNVLDFTIVFLGVFT) form a helical membrane-spanning segment. At 137 to 160 (VILEQVNVIQSHTAPMSSKGAGLD) the chain is on the extracellular side. The chain crosses the membrane as a helical span at residues 161–179 (VKALRAFRVLRPLRLVSGV). Topologically, residues 180–196 (PSLQVVLNSIFKAMLPL) are cytoplasmic. A helical membrane pass occupies residues 197 to 218 (FHIALLVLFMVIIYAIIGLELF). The Extracellular portion of the chain corresponds to 219–279 (KGKMHKTCYF…HGITHFDNFG (61 aa)). 2 disulfides stabilise this stretch: Cys-226-Cys-254 and Cys-245-Cys-261. An N-linked (GlcNAc...) asparagine glycan is attached at Asn-257. The segment at residues 280 to 301 (FSMLTVYQCITMEGWTDVLYWV) is an intramembrane region (pore-forming). Positions 290-293 (TMEG) match the Selectivity filter of repeat I motif. Glu-292 contributes to the Ca(2+) binding site. The Extracellular portion of the chain corresponds to 302–309 (NDAIGNEW). A helical transmembrane segment spans residues 310-330 (PWIYFVTLILLGSFFILNLVL). The Cytoplasmic segment spans residues 331–432 (GVLSGEFTKE…WKCHDIVKSK (102 aa)). Residues 357-374 (QQLDEDLRGYMSWITQGE) are binding to the beta subunit. 2 positions are modified to phosphoserine: Ser-393 and Ser-397. One copy of the II repeat lies at 418–664 (NRIFRWKCHD…VFLAIAVDNL (247 aa)). A helical transmembrane segment spans residues 433-451 (VFYWLVILIVALNTLSIAS). Topologically, residues 452–462 (EHHNQPLWLTR) are extracellular. Residues 463–483 (LQDIANRVLLSLFTTEMLMKM) traverse the membrane as a helical segment. At 484–494 (YGLGLRQYFMS) the chain is on the cytoplasmic side. A helical membrane pass occupies residues 495–514 (IFNRFDCFVVCSGILEILLV). Residues 515-523 (ESGAMTPLG) are Extracellular-facing. The chain crosses the membrane as a helical span at residues 524–542 (ISVLRCIRLLRIFKITKYW). At 543-561 (TSLSNLVASLLNSIRSIAS) the chain is on the cytoplasmic side. The chain crosses the membrane as a helical span at residues 562 to 581 (LLLLLFLFIVIFALLGMQLF). The Extracellular segment spans residues 582–601 (GGRYDFEDTEVRRSNFDNFP). Residues 602-623 (QALISVFQVLTGEDWTSMMYNG) constitute an intramembrane region (pore-forming). Positions 612-615 (TGED) match the Selectivity filter of repeat II motif. Residue Glu-614 coordinates Ca(2+). Residues 624 to 633 (IMAYGGPSYP) are Extracellular-facing. A helical transmembrane segment spans residues 634 to 653 (GMLVCIYFIILFVCGNYILL). Residues 654 to 799 (NVFLAIAVDN…VLCHRIVNAT (146 aa)) lie on the Cytoplasmic side of the membrane. 2 disordered regions span residues 675–717 (KAKA…IPTT) and 731–757 (EVKD…LSPR). Ser-687 bears the Phosphoserine; by PKA mark. The segment covering 690 to 711 (LPDKSEEEKSTMAKKLEQKPKG) has biased composition (basic and acidic residues). The span at 742-751 (PGDDEEDEPE) shows a compositional bias: acidic residues. The segment at 747 to 760 (EDEPEIPLSPRPRP) is interaction with STAC, STAC2 and STAC3 (via SH3 domains). An III repeat occupies 786–1068 (NKIRVLCHRI…IFVGFVIVTF (283 aa)). The helical transmembrane segment at 800–818 (WFTNFILLFILLSSAALAA) threads the bilayer. Residues 819 to 830 (EDPIRADSMRNQ) are Extracellular-facing. Residues 831–850 (ILKHFDIGFTSVFTVEIVLK) form a helical membrane-spanning segment. Over 851–866 (MTTYGAFLHKGSFCRN) the chain is Cytoplasmic. Residues 867-885 (YFNMLDLLVVAVSLISMGL) traverse the membrane as a helical segment. The Extracellular segment spans residues 886–892 (ESSAISV). Residues 893-911 (VKILRVLRVLRPLRAINRA) form a helical membrane-spanning segment. Residues 912 to 930 (KGLKHVVQCMFVAISTIGN) lie on the Cytoplasmic side of the membrane. The chain crosses the membrane as a helical span at residues 931 to 950 (IVLVTTLLQFMFACIGVQLF). At 951–1000 (KGKFFRCTDLSKMTEEECRGYYYVYKDGDPMQIELRHREWVHSDFHFDNV) the chain is on the extracellular side. Residues Cys-957 and Cys-968 are joined by a disulfide bond. The dihydropyridine binding stretch occupies residues 988 to 1077 (REWVHSDFHF…FQEQGETEYK (90 aa)). Residues 1001–1021 (LSAMMSLFTVSTFEGWPQLLY) constitute an intramembrane region (pore-forming). The Selectivity filter of repeat III motif lies at 1012–1015 (TFEG). Glu-1014 lines the Ca(2+) pocket. The Extracellular portion of the chain corresponds to 1022-1038 (KAIDSNAEDVGPIYNNR). A helical transmembrane segment spans residues 1039–1060 (VEMAIFFIIYIILIAFFMMNIF). Residues 1061-1118 (VGFVIVTFQEQGETEYKNCELDKNQRQCVQYALKARPLRCYIPKNPYQYQVWYIVTSS) are Cytoplasmic-facing. One copy of the IV repeat lies at 1105-1384 (NPYQYQVWYI…LFVAVIMDNF (280 aa)). The chain crosses the membrane as a helical span at residues 1119–1140 (YFEYLMFALIMLNTICLGMQHY). A glycan (N-linked (GlcNAc...) asparagine) is linked at Asn-1141. Residues 1141–1148 (NQSEQMNH) are Extracellular-facing. Residues 1149 to 1170 (ISDILNVAFTIIFTLEMILKLM) form a helical membrane-spanning segment. Topologically, residues 1171–1180 (AFKARGYFGD) are cytoplasmic. Residues 1181–1200 (PWNVFDFLIVIGSIIDVILS) traverse the membrane as a helical segment. At 1201 to 1231 (EIDTFLASSGGLYCLGGGCGNVDPDESARIS) the chain is on the extracellular side. A helical membrane pass occupies residues 1232–1250 (SAFFRLFRVMRLIKLLSRA). At 1251-1268 (EGVRTLLWTFIKSFQALP) the chain is on the cytoplasmic side. The helical transmembrane segment at 1269-1289 (YVALLIVMLFFIYAVIGMQMF) threads the bilayer. At 1290 to 1311 (GKIALVDGTQINRNNNFQTFPQ) the chain is on the extracellular side. The pore-forming intramembrane region spans 1312 to 1330 (AVLLLFRCATGEAWQEILL). A Selectivity filter of repeat IV motif is present at residues 1321–1324 (TGEA). The Extracellular segment spans residues 1331–1356 (ACSYGKLCDPESDYAPGEEYTCGTNF). The segment at 1337–1403 (LCDPESDYAP…LGPHHLDEFK (67 aa)) is dihydropyridine binding. Cysteines 1338 and 1352 form a disulfide. The tract at residues 1349–1391 (EYTCGTNFAYYYFISFYMLCAFLVINLFVAVIMDNFDYLTRDW) is phenylalkylamine binding. A helical membrane pass occupies residues 1357–1381 (AYYYFISFYMLCAFLVINLFVAVIM). Topologically, residues 1382-1873 (DNFDYLTRDW…SQETLIPPRL (492 aa)) are cytoplasmic. An interaction with calmodulin region spans residues 1522–1542 (KFYATFLIQEHFRKFMKRQEE). A Phosphoserine; by PKA and CAMK2 modification is found at Ser-1575. Position 1617 is a phosphoserine; by PKA (Ser-1617). The interval 1731–1780 (MPRGQAPPAPCQCPRVESSMPEDRKSSTPGSLHEETPHSRSTRENTSRCS) is disordered. Positions 1751–1776 (PEDRKSSTPGSLHEETPHSRSTRENT) are enriched in basic and acidic residues.

The protein belongs to the calcium channel alpha-1 subunit (TC 1.A.1.11) family. CACNA1S subfamily. As to quaternary structure, component of a calcium channel complex consisting of a pore-forming alpha subunit (CACNA1S) and the ancillary subunits CACNB1 or CACNB2, CACNG1 and CACNA2D1. The channel complex contains alpha, beta, gamma and delta subunits in a 1:1:1:1 ratio, i.e. it contains either CACNB1 or CACNB2. CACNA1S channel activity is modulated by the auxiliary subunits (CACNB1 or CACNB2, CACNG1 and CACNA2D1). Interacts with DYSF and JSRP1. Interacts with RYR1. Interacts with STAC, STAC2 and STAC3 (via their SH3 domains). Interacts with CALM. In terms of processing, the alpha-1S subunit is found in two isoforms in the skeletal muscle: a minor form of 212 kDa containing the complete amino acid sequence, and a major form of 190 kDa derived from the full-length form by post-translational proteolysis close to Phe-1690. Phosphorylated. Phosphorylation by PKA activates the calcium channel. Both the minor and major forms are phosphorylated in vitro by PKA. Phosphorylation at Ser-1575 is involved in beta-adrenergic-mediated regulation of the channel. Skeletal muscle specific.

It localises to the cell membrane. It is found in the sarcolemma. Its subcellular location is the T-tubule. It catalyses the reaction Ca(2+)(in) = Ca(2+)(out). Channel activity is blocked by dihydropyridines (DHP), phenylalkylamines, and by benzothiazepines. Functionally, pore-forming, alpha-1S subunit of the voltage-gated calcium channel that gives rise to L-type calcium currents in skeletal muscle. Calcium channels containing the alpha-1S subunit play an important role in excitation-contraction coupling in skeletal muscle via their interaction with RYR1, which triggers Ca(2+) release from the sarcoplasmic reticulum and ultimately results in muscle contraction. Long-lasting (L-type) calcium channels belong to the 'high-voltage activated' (HVA) group. This Homo sapiens (Human) protein is Voltage-dependent L-type calcium channel subunit alpha-1S (CACNA1S).